The primary structure comprises 369 residues: Superinfection exclusion protein (369 aa).

The first 15 residues, 1–15 (MIALLILSLTCSVST), serve as a signal peptide directing secretion.

The protein belongs to the serpin family. Orthopoxvirus OPG040 subfamily. In terms of assembly, interacts with OPG185/A56 protein.

Its subcellular location is the virion membrane. It is found in the host cell membrane. Functionally, negatively regulates superinfection and syncytium formation in infected host cells. Acts in concert with OPG185/A56 protein at the host cell membrane by interacting with and inhibiting the mature virion entry/fusion complex (EFC). This mechanism ensures that new virions released from the cell cannot enter already infected cells. This chain is Superinfection exclusion protein (OPG040), found in Vaccinia virus (strain Western Reserve) (VACV).